We begin with the raw amino-acid sequence, 1059 residues long: Zinc finger protein 865 (1059 aa).

3 disordered regions span residues 1 to 24 (MEAN…EDGV), 58 to 142 (LPCA…DAAF), and 161 to 206 (NLKR…CDPT). Gly residues predominate over residues 8–21 (SGAGGGGSSGIGGE). Pro residues predominate over residues 61–78 (APGPPPQPPPQPPPPQYD). Residues 93-119 (SSSSSSSSSSSSSSSSSSSSSSSSSQA) are compositionally biased toward low complexity. Composition is skewed to pro residues over residues 124–137 (PPLP…PPPL) and 183–198 (APGP…PGPP). 2 C2H2-type zinc fingers span residues 224–246 (FPCG…MLVH) and 252–274 (YECG…RRCH). A disordered region spans residues 275–342 (KDVPPAAGGP…PAGVGVPPPA (68 aa)). The segment covering 281–296 (AGGPPQPGPHLPPLGL) has biased composition (pro residues). Low complexity-rich tracts occupy residues 297–316 (PAPA…SSGP) and 324–337 (APSA…AGVG). C2H2-type zinc fingers lie at residues 350–372 (FACP…QIIH), 378–400 (FSCS…VKTH), 407–429 (LPCG…QAAH), and 441–463 (YPCD…KAAH). The tract at residues 461-503 (AAHAPPAAAAEAPKDGAASAPQPPPTFPPGPYLLPPDPPTTDS) is disordered. The span at 463-480 (HAPPAAAAEAPKDGAASA) shows a compositional bias: low complexity. Residues 481 to 499 (PQPPPTFPPGPYLLPPDPP) show a composition bias toward pro residues. C2H2-type zinc fingers lie at residues 550–572 (FCCG…ERIH), 578–600 (HQCP…HVVH), 606–628 (YKCE…RQVH), 669–691 (YACS…KEVH), and 697–719 (YGCD…KLVH). Positions 726 to 747 (LLPPAPGGLQPPDGSSGTDAAS) are disordered. 9 consecutive C2H2-type zinc fingers follow at residues 792–814 (FSCA…KYVH), 820–842 (LGCG…RRSH), 848–870 (FRCP…QRCH), 876–898 (YRCG…RVVH), 904–926 (FKCG…RRLH), 932–954 (QRCS…QRLH), 960–982 (YRCE…QRAH), 989–1011 (LRCP…LAAH), and 1017–1039 (FRCS…RLAH). A Glycyl lysine isopeptide (Lys-Gly) (interchain with G-Cter in SUMO2) cross-link involves residue K802. A Glycyl lysine isopeptide (Lys-Gly) (interchain with G-Cter in SUMO2) cross-link involves residue K1040.

This sequence belongs to the krueppel C2H2-type zinc-finger protein family.

The protein localises to the nucleus. Functionally, may be involved in transcriptional regulation. This chain is Zinc finger protein 865 (ZNF865), found in Homo sapiens (Human).